A 653-amino-acid polypeptide reads, in one-letter code: Poly [ADP-ribose] polymerase 2 (653 aa).

The SAP 1 domain maps to 2–36; that stretch reads SARLRVADVRAELQRRGLDVSGTKPALVRRLDAAI. Residues 64–84 form a disordered region; that stretch reads NCGNNKRKRSGDGGEEGNGDT. Residues 69 to 72 carry the Nuclear localization signal motif; that stretch reads KRKR. The SAP 2 domain maps to 91–125; it reads LEGMSYRELQGLAKARGVAANGGKKDVIQRLLSAT. The WGR domain maps to 179 to 276; the sequence is NYHVLQVGDE…KNFKCYAKKY (98 aa). Positions 301–419 constitute a PARP alpha-helical domain; it reads ETKLETRIAQ…EIEIATKLLE (119 aa). The PARP catalytic domain maps to 427–653; that stretch reads DPLYARYKQL…LHVNFNFKRR (227 aa).

This sequence belongs to the ARTD/PARP family.

It localises to the nucleus. The enzyme catalyses NAD(+) + (ADP-D-ribosyl)n-acceptor = nicotinamide + (ADP-D-ribosyl)n+1-acceptor + H(+).. The catalysed reaction is L-aspartyl-[protein] + NAD(+) = 4-O-(ADP-D-ribosyl)-L-aspartyl-[protein] + nicotinamide. It catalyses the reaction L-glutamyl-[protein] + NAD(+) = 5-O-(ADP-D-ribosyl)-L-glutamyl-[protein] + nicotinamide. Functionally, involved in the base excision repair (BER) pathway, by catalyzing the poly(ADP-ribosyl)ation of a limited number of acceptor proteins involved in chromatin architecture and in DNA metabolism. This modification follows DNA damages and appears as an obligatory step in a detection/signaling pathway leading to the reparation of DNA strand breaks. The polypeptide is Poly [ADP-ribose] polymerase 2 (PARP2) (Zea mays (Maize)).